The primary structure comprises 948 residues: Protocadherin alpha-10 (948 aa).

An N-terminal signal peptide occupies residues 1-28 (MVSRCSCLGVQCLLLSLLLLAAWEVGSG). 6 Cadherin domains span residues 29-132 (QLHY…PPRF), 133-241 (SVTE…APIF), 242-349 (DRPV…SPEV), 350-454 (IVTS…APAF), 455-564 (AQPE…APAL), and 587-689 (GHVV…APEV). At 29-695 (QLHYSVYEEA…APEVALVDVN (667 aa)) the chain is on the extracellular side. Residues Asn256 and Asn264 are each glycosylated (N-linked (GlcNAc...) asparagine). N-linked (GlcNAc...) asparagine glycosylation occurs at Asn547. The chain crosses the membrane as a helical span at residues 696–716 (VYLIIAICAVSSLLVLTLLLY). Over 717-948 (TALRCSAAPT…GNSTTDNSDQ (232 aa)) the chain is Cytoplasmic. 6 PXXP repeats span residues 732–735 (PVKP), 772–775 (PSLP), 797–800 (PRQP), 830–833 (PGGP), 871–874 (PGNP), and 889–892 (PGSP). A 6 X 4 AA repeats of P-X-X-P region spans residues 732-892 (PVKPTLVCSS…PDKFIIPGSP (161 aa)). Disordered stretches follow at residues 783–804 (DGEDQSIGGDHSRKPRQPNPDW) and 827–948 (RAGP…NSDQ). Over residues 907-921 (DKSDFITFGKKEETK) the composition is skewed to basic and acidic residues.

Its subcellular location is the cell membrane. In terms of biological role, potential calcium-dependent cell-adhesion protein. May be involved in the establishment and maintenance of specific neuronal connections in the brain. In Pan troglodytes (Chimpanzee), this protein is Protocadherin alpha-10 (PCDHA10).